Reading from the N-terminus, the 496-residue chain is NADH-ubiquinone oxidoreductase 51 kDa subunit, mitochondrial (496 aa).

The N-terminal 30 residues, Met1–Phe30, are a transit peptide targeting the mitochondrion. Gly98 to Gly107 lines the NAD(+) pocket. Gly214–Thr261 provides a ligand contact to FMN. Residues Cys393, Cys396, Cys399, and Cys439 each coordinate [4Fe-4S] cluster.

Belongs to the complex I 51 kDa subunit family. Complex I is composed of about 40 different subunits. This is a component of the flavoprotein-sulfur (FP) fragment of the enzyme. The cofactor is FMN. Requires [4Fe-4S] cluster as cofactor.

It is found in the mitochondrion inner membrane. The catalysed reaction is a ubiquinone + NADH + 5 H(+)(in) = a ubiquinol + NAD(+) + 4 H(+)(out). Functionally, core subunit of the mitochondrial membrane respiratory chain NADH dehydrogenase (Complex I) that is believed to belong to the minimal assembly required for catalysis. Complex I functions in the transfer of electrons from NADH to the respiratory chain. The immediate electron acceptor for the enzyme is believed to be ubiquinone. This Aspergillus niger protein is NADH-ubiquinone oxidoreductase 51 kDa subunit, mitochondrial (NUO51).